The sequence spans 68 residues: Beta-defensin 1 (68 aa).

The first 21 residues, 1 to 21 (MRTSYLLLFTLCLLLSEMASG), serve as a signal peptide directing secretion. Residues 22–32 (DNFLTGLGHRS) constitute a propeptide that is removed on maturation. 3 disulfide bridges follow: Cys-37-Cys-66, Cys-44-Cys-59, and Cys-49-Cys-67.

This sequence belongs to the beta-defensin family. Monomer. Homodimer.

The protein resides in the secreted. The protein localises to the membrane. In terms of biological role, has bactericidal activity. May act as a ligand for C-C chemokine receptor CCR6. Positively regulates the sperm motility and bactericidal activity in a CCR6-dependent manner. Binds to CCR6 and triggers Ca2+ mobilization in the sperm which is important for its motility. The sequence is that of Beta-defensin 1 (DEFB1) from Allochrocebus preussi (Preuss's monkey).